A 927-amino-acid chain; its full sequence is Isoleucine--tRNA ligase (927 aa).

Residues 57–67 (PFANGNIHMGH) carry the 'HIGH' region motif. E553 serves as a coordination point for L-isoleucyl-5'-AMP. A 'KMSKS' region motif is present at residues 594-598 (KMSKS). ATP is bound at residue K597. 4 residues coordinate Zn(2+): C886, C889, C906, and C909.

It belongs to the class-I aminoacyl-tRNA synthetase family. IleS type 1 subfamily. Monomer. It depends on Zn(2+) as a cofactor.

The protein localises to the cytoplasm. It carries out the reaction tRNA(Ile) + L-isoleucine + ATP = L-isoleucyl-tRNA(Ile) + AMP + diphosphate. Catalyzes the attachment of isoleucine to tRNA(Ile). As IleRS can inadvertently accommodate and process structurally similar amino acids such as valine, to avoid such errors it has two additional distinct tRNA(Ile)-dependent editing activities. One activity is designated as 'pretransfer' editing and involves the hydrolysis of activated Val-AMP. The other activity is designated 'posttransfer' editing and involves deacylation of mischarged Val-tRNA(Ile). The protein is Isoleucine--tRNA ligase of Lactobacillus helveticus (strain DPC 4571).